Here is a 416-residue protein sequence, read N- to C-terminus: UDP-N-acetylmuramoylalanine--D-glutamate ligase (416 aa).

108–114 (GTVGKTT) is an ATP binding site.

It belongs to the MurCDEF family.

It is found in the cytoplasm. It catalyses the reaction UDP-N-acetyl-alpha-D-muramoyl-L-alanine + D-glutamate + ATP = UDP-N-acetyl-alpha-D-muramoyl-L-alanyl-D-glutamate + ADP + phosphate + H(+). Its pathway is cell wall biogenesis; peptidoglycan biosynthesis. Cell wall formation. Catalyzes the addition of glutamate to the nucleotide precursor UDP-N-acetylmuramoyl-L-alanine (UMA). This chain is UDP-N-acetylmuramoylalanine--D-glutamate ligase, found in Chlamydia muridarum (strain MoPn / Nigg).